A 363-amino-acid chain; its full sequence is 3-isopropylmalate dehydrogenase (363 aa).

79–92 (GPKWEHLPPNDQPE) contributes to the NAD(+) binding site. Residues Arg100, Arg110, Arg139, and Asp228 each coordinate substrate. 3 residues coordinate Mg(2+): Asp228, Asp252, and Asp256. 286 to 298 (GSAPDIAGKNIAN) serves as a coordination point for NAD(+).

It belongs to the isocitrate and isopropylmalate dehydrogenases family. LeuB type 1 subfamily. As to quaternary structure, homodimer. Mg(2+) is required as a cofactor. The cofactor is Mn(2+).

It is found in the cytoplasm. The enzyme catalyses (2R,3S)-3-isopropylmalate + NAD(+) = 4-methyl-2-oxopentanoate + CO2 + NADH. It functions in the pathway amino-acid biosynthesis; L-leucine biosynthesis; L-leucine from 3-methyl-2-oxobutanoate: step 3/4. Functionally, catalyzes the oxidation of 3-carboxy-2-hydroxy-4-methylpentanoate (3-isopropylmalate) to 3-carboxy-4-methyl-2-oxopentanoate. The product decarboxylates to 4-methyl-2 oxopentanoate. This chain is 3-isopropylmalate dehydrogenase, found in Aliivibrio fischeri (strain ATCC 700601 / ES114) (Vibrio fischeri).